We begin with the raw amino-acid sequence, 402 residues long: Flavohemoprotein (402 aa).

The Globin domain maps to 1 to 138; the sequence is MLSPEVRALV…LADLLIGRER (138 aa). His85 provides a ligand contact to heme b. Residues Tyr95 and Glu137 each act as charge relay system in the active site. The interval 149 to 402 is reductase; the sequence is GGWTGWRAFK…AEVFGTGGVA (254 aa). In terms of domain architecture, FAD-binding FR-type spans 152–261; it reads TGWRAFKVVR…SPPQGDFTLD (110 aa). Residues Tyr190 and 206–209 each bind FAD; that span reads RQYS. 274–279 is a binding site for NADP(+); the sequence is GVGLTP. 395-398 provides a ligand contact to FAD; it reads VFGT.

This sequence belongs to the globin family. Two-domain flavohemoproteins subfamily. In the C-terminal section; belongs to the flavoprotein pyridine nucleotide cytochrome reductase family. Requires heme b as cofactor. FAD serves as cofactor.

The catalysed reaction is 2 nitric oxide + NADPH + 2 O2 = 2 nitrate + NADP(+) + H(+). It catalyses the reaction 2 nitric oxide + NADH + 2 O2 = 2 nitrate + NAD(+) + H(+). In terms of biological role, is involved in NO detoxification in an aerobic process, termed nitric oxide dioxygenase (NOD) reaction that utilizes O(2) and NAD(P)H to convert NO to nitrate, which protects the bacterium from various noxious nitrogen compounds. Therefore, plays a central role in the inducible response to nitrosative stress. This Bordetella pertussis (strain Tohama I / ATCC BAA-589 / NCTC 13251) protein is Flavohemoprotein.